A 128-amino-acid polypeptide reads, in one-letter code: Calcitonin gene-related peptide 1 (128 aa).

The N-terminal stretch at 1–25 (MGLWKSSPFLAFSILVLCQAGGLQA) is a signal peptide. Positions 26 to 80 (APFRSALEGLPDPTALSEKEGRLLLAALVKAYVQRKNELEQEQEQETEGSSITAQ) are excised as a propeptide. The tract at residues 63-83 (ELEQEQEQETEGSSITAQKRS) is disordered. Over residues 74–83 (GSSITAQKRS) the composition is skewed to polar residues. Residues Cys-84 and Cys-89 are joined by a disulfide bond. Residue Phe-119 is modified to Phenylalanine amide. Positions 125 to 128 (DLRA) are excised as a propeptide.

The protein belongs to the calcitonin family.

It is found in the secreted. Functionally, CGRP1/CALCA is a peptide hormone that induces vasodilation mediated by the CALCRL-RAMP1 receptor complex. Dilates a variety of vessels including the coronary, cerebral and systemic vasculature. Its abundance in the CNS also points toward a neurotransmitter or neuromodulator role. It also elevates platelet cAMP. CGRP1 can also bind and activate CALCR-RAMP1 (AMYR1) receptor complex. The polypeptide is Calcitonin gene-related peptide 1 (CALCA) (Canis lupus familiaris (Dog)).